A 716-amino-acid polypeptide reads, in one-letter code: Hepatocyte growth factor-like protein (716 aa).

An N-terminal signal peptide occupies residues 1-18 (MGWLPLLLLLVQCSRALG). Residues 19–105 (QRSPLNDFQL…SLCHLFQKKD (87 aa)) form the PAN domain. 20 cysteine pairs are disulfide-bonded: Cys-56–Cys-78, Cys-60–Cys-66, Cys-110–Cys-186, Cys-131–Cys-169, Cys-157–Cys-181, Cys-191–Cys-268, Cys-194–Cys-333, Cys-212–Cys-251, Cys-240–Cys-263, Cys-292–Cys-370, Cys-313–Cys-352, Cys-341–Cys-364, Cys-379–Cys-457, Cys-400–Cys-440, Cys-428–Cys-452, Cys-477–Cys-593, Cys-512–Cys-528, Cys-607–Cys-672, Cys-637–Cys-651, and Cys-662–Cys-690. An N-linked (GlcNAc...) asparagine glycan is attached at Asn-72. 4 consecutive Kringle domains span residues 110–186 (CIMD…IKTC), 191–268 (CVLC…LPSC), 292–370 (CFRG…IPRC), and 379–457 (CYHG…LQRC). An N-linked (GlcNAc...) asparagine glycan is attached at Asn-173. Asn-305 carries an N-linked (GlcNAc...) asparagine glycan. Positions 489 to 714 (VVGGHPGNSP…FVDWINKVMQ (226 aa)) constitute a Peptidase S1 domain. Asn-620 is a glycosylation site (N-linked (GlcNAc...) asparagine).

The protein belongs to the peptidase S1 family. Plasminogen subfamily. As to quaternary structure, dimer of an alpha chain and a beta chain linked by a disulfide bond. Interacts (via beta chain) with MST1R (via SEMA domain). In terms of processing, cleaved after Arg-488, probably by HPN/Hepsin, to yield the active form consisting of two disulfide-linked chains. Liver. Lower levels in lung, placenta and adrenal.

The protein localises to the secreted. The protein is Hepatocyte growth factor-like protein (Mst1) of Mus musculus (Mouse).